The primary structure comprises 177 residues: Co-chaperone protein HscB homolog (177 aa).

In terms of domain architecture, J spans 8–80 (DFFALFGLPR…LPRAQYMLEL (73 aa)).

Belongs to the HscB family. As to quaternary structure, interacts with HscA and stimulates its ATPase activity.

In terms of biological role, co-chaperone involved in the maturation of iron-sulfur cluster-containing proteins. Seems to help targeting proteins to be folded toward HscA. The polypeptide is Co-chaperone protein HscB homolog (Aromatoleum aromaticum (strain DSM 19018 / LMG 30748 / EbN1) (Azoarcus sp. (strain EbN1))).